We begin with the raw amino-acid sequence, 322 residues long: 3-hydroxyacyl-CoA dehydrogenase FVEG_12628 (322 aa).

A helical membrane pass occupies residues 5–25; that stretch reads IRTVAIVGCGVIGMGWAVLFL. Glutamate 151 acts as the For hydroxyacyl-coenzyme A dehydrogenase activity in catalysis.

It belongs to the 3-hydroxyacyl-CoA dehydrogenase family.

The protein localises to the membrane. In terms of biological role, 3-hydroxyacyl-CoA dehydrogenase; part of the Fusarium detoxification of benzoxazolinone cluster 2 (FDB2) involved in the degradation of benzoxazolinones produced by the host plant. Maize, wheat, and rye produce the 2 benzoxazinone phytoanticipins 2,4-dihy-droxy-7-methoxy-1,4-benzoxazin-3-one (DIMBOA) and 2,4-dihydroxy-1,4-benzoxazin-3-one (DIBOA) that, due to their inherent instability once released, spontaneously degrade to the more stable corresponding benzoxazolinones, 6-methoxy-2-benzoxazolinone (MBOA) and 2-benzoxazolinone (BOA), respectively. The first step in the detoxification of benzoxazolinones involves the hydrolysis of the cyclic ester bond of benzoxazolinones by the FDB1 cluster gamma-lactamase MBL1 to aminophenols. MBL1 is able to convert BOA into 2-aminophenol (2-AP), as well as MBOA into 5-methoxy-2-aminophenol (2-AMP). The FDB2 cluster N-malonyltransferase FDB2/NAT1 then metabolizes aminophenols via N-malonylation to non-toxic malonamic acids. FDB2/NAT1 converts 2-AP into N-(2-hydroxyphenyl) malonamic acid (HPMA) and 2-AMP into N-(2-hydroxy-4-methoxyphenyl) malonamic acid (HMPMA). The duplicated dienlactone hydrolases DLH1 and DLH2 may provide redundant function for hydrolyzing the lactone moiety in the BOA molecule. The roles of the amidases an other enzymes encoded by the 2 FDB clusters have not been identified so far. This is 3-hydroxyacyl-CoA dehydrogenase FVEG_12628 from Gibberella moniliformis (strain M3125 / FGSC 7600) (Maize ear and stalk rot fungus).